Consider the following 387-residue polypeptide: tRNA pseudouridine synthase B (387 aa).

Residue D43 is the Nucleophile of the active site.

Belongs to the pseudouridine synthase TruB family. Type 1 subfamily.

It carries out the reaction uridine(55) in tRNA = pseudouridine(55) in tRNA. Its function is as follows. Responsible for synthesis of pseudouridine from uracil-55 in the psi GC loop of transfer RNAs. The sequence is that of tRNA pseudouridine synthase B from Bifidobacterium longum (strain DJO10A).